Reading from the N-terminus, the 482-residue chain is MEGFKLIKVLFATSEANPFIKTGGLGDVMGALPKELKRKGIDARVILPKYSAIKGELLDKLSFKKWFMVPVGWRNQYCGVYQCEYDEVIYYLLDSEFYFHRNGLYGEGDDGERFAFFDRAVLETLKEIDWCPDIIHCNDWQTGMIPVLHKLEYSKDPFYKNIKTVTSIHNLLFQGNFSADVLPELFGYDYEPVRNGSLEFYGGMSFMKGAINYSDRILTVSETYAKEIKTPYFGENLDGLLRERGYALKGIVNGIDYDEFNPSKDSLIAKNFSVKTIEDKVLNKLALQKELGLPINPDIPMISIVSRLTNQKGCDLIVNIANRLLQRNVQLVILGTGDYNYENHFKGLQELYPTKVSANIKFDNGLAHRIYASSDIFLMPSLFEPCGLGQLIALRYGAIPIVRETGGLKDTIHSYNKYTGIGNGFSFTNYNHNDLMHVIELALETYDDKEIWRSLIIQAMDSDNSWNKSAEKYKELYEELIK.

ADP-alpha-D-glucose is bound at residue Lys-21.

It belongs to the glycosyltransferase 1 family. Bacterial/plant glycogen synthase subfamily.

The enzyme catalyses [(1-&gt;4)-alpha-D-glucosyl](n) + ADP-alpha-D-glucose = [(1-&gt;4)-alpha-D-glucosyl](n+1) + ADP + H(+). Its pathway is glycan biosynthesis; glycogen biosynthesis. Synthesizes alpha-1,4-glucan chains using ADP-glucose. This is Glycogen synthase from Clostridium perfringens (strain 13 / Type A).